The primary structure comprises 279 residues: 4-hydroxy-3-methylbut-2-enyl diphosphate reductase (279 aa).

Position 12 (C12) interacts with [4Fe-4S] cluster. (2E)-4-hydroxy-3-methylbut-2-enyl diphosphate contacts are provided by H36 and H70. Residues H36 and H70 each coordinate dimethylallyl diphosphate. 2 residues coordinate isopentenyl diphosphate: H36 and H70. C92 provides a ligand contact to [4Fe-4S] cluster. H120 is a binding site for (2E)-4-hydroxy-3-methylbut-2-enyl diphosphate. H120 contacts dimethylallyl diphosphate. H120 serves as a coordination point for isopentenyl diphosphate. The active-site Proton donor is E122. T158 lines the (2E)-4-hydroxy-3-methylbut-2-enyl diphosphate pocket. C186 contributes to the [4Fe-4S] cluster binding site. (2E)-4-hydroxy-3-methylbut-2-enyl diphosphate contacts are provided by S214, S215, N216, and S258. Dimethylallyl diphosphate is bound by residues S214, S215, N216, and S258. Residues S214, S215, N216, and S258 each contribute to the isopentenyl diphosphate site.

It belongs to the IspH family. The cofactor is [4Fe-4S] cluster.

It carries out the reaction isopentenyl diphosphate + 2 oxidized [2Fe-2S]-[ferredoxin] + H2O = (2E)-4-hydroxy-3-methylbut-2-enyl diphosphate + 2 reduced [2Fe-2S]-[ferredoxin] + 2 H(+). It catalyses the reaction dimethylallyl diphosphate + 2 oxidized [2Fe-2S]-[ferredoxin] + H2O = (2E)-4-hydroxy-3-methylbut-2-enyl diphosphate + 2 reduced [2Fe-2S]-[ferredoxin] + 2 H(+). It functions in the pathway isoprenoid biosynthesis; dimethylallyl diphosphate biosynthesis; dimethylallyl diphosphate from (2E)-4-hydroxy-3-methylbutenyl diphosphate: step 1/1. Its pathway is isoprenoid biosynthesis; isopentenyl diphosphate biosynthesis via DXP pathway; isopentenyl diphosphate from 1-deoxy-D-xylulose 5-phosphate: step 6/6. In terms of biological role, catalyzes the conversion of 1-hydroxy-2-methyl-2-(E)-butenyl 4-diphosphate (HMBPP) into a mixture of isopentenyl diphosphate (IPP) and dimethylallyl diphosphate (DMAPP). Acts in the terminal step of the DOXP/MEP pathway for isoprenoid precursor biosynthesis. This is 4-hydroxy-3-methylbut-2-enyl diphosphate reductase from Campylobacter fetus subsp. fetus (strain 82-40).